The following is a 954-amino-acid chain: Glycine dehydrogenase (decarboxylating) (954 aa).

N6-(pyridoxal phosphate)lysine is present on Lys702.

It belongs to the GcvP family. The glycine cleavage system is composed of four proteins: P, T, L and H. Requires pyridoxal 5'-phosphate as cofactor.

It catalyses the reaction N(6)-[(R)-lipoyl]-L-lysyl-[glycine-cleavage complex H protein] + glycine + H(+) = N(6)-[(R)-S(8)-aminomethyldihydrolipoyl]-L-lysyl-[glycine-cleavage complex H protein] + CO2. Its function is as follows. The glycine cleavage system catalyzes the degradation of glycine. The P protein binds the alpha-amino group of glycine through its pyridoxal phosphate cofactor; CO(2) is released and the remaining methylamine moiety is then transferred to the lipoamide cofactor of the H protein. This Xanthomonas euvesicatoria pv. vesicatoria (strain 85-10) (Xanthomonas campestris pv. vesicatoria) protein is Glycine dehydrogenase (decarboxylating).